Consider the following 158-residue polypeptide: 6,7-dimethyl-8-ribityllumazine synthase (158 aa).

5-amino-6-(D-ribitylamino)uracil contacts are provided by residues F23, S61 to E63, and A85 to I87. Residue E90–T91 coordinates (2S)-2-hydroxy-3-oxobutyl phosphate. H93 functions as the Proton donor in the catalytic mechanism. F118 provides a ligand contact to 5-amino-6-(D-ribitylamino)uracil. R132 serves as a coordination point for (2S)-2-hydroxy-3-oxobutyl phosphate.

Belongs to the DMRL synthase family.

The catalysed reaction is (2S)-2-hydroxy-3-oxobutyl phosphate + 5-amino-6-(D-ribitylamino)uracil = 6,7-dimethyl-8-(1-D-ribityl)lumazine + phosphate + 2 H2O + H(+). It functions in the pathway cofactor biosynthesis; riboflavin biosynthesis; riboflavin from 2-hydroxy-3-oxobutyl phosphate and 5-amino-6-(D-ribitylamino)uracil: step 1/2. Catalyzes the formation of 6,7-dimethyl-8-ribityllumazine by condensation of 5-amino-6-(D-ribitylamino)uracil with 3,4-dihydroxy-2-butanone 4-phosphate. This is the penultimate step in the biosynthesis of riboflavin. The chain is 6,7-dimethyl-8-ribityllumazine synthase from Prochlorococcus marinus (strain MIT 9301).